The sequence spans 379 residues: Cytochrome b (379 aa).

4 consecutive transmembrane segments (helical) span residues 33-53 (FGSL…FLAM), 77-98 (WLIR…FIHV), 113-133 (WNIG…GYVL), and 178-198 (FFAF…VHLL). Heme b-binding residues include histidine 83 and histidine 97. Heme b is bound by residues histidine 182 and histidine 196. Histidine 201 provides a ligand contact to a ubiquinone. 4 consecutive transmembrane segments (helical) span residues 226–246 (IKDL…ALFF), 288–308 (LGGV…PLLN), 320–340 (ITQT…WIGG), and 347–367 (FTMX…ILMP).

It belongs to the cytochrome b family. In terms of assembly, the cytochrome bc1 complex contains 11 subunits: 3 respiratory subunits (MT-CYB, CYC1 and UQCRFS1), 2 core proteins (UQCRC1 and UQCRC2) and 6 low-molecular weight proteins (UQCRH/QCR6, UQCRB/QCR7, UQCRQ/QCR8, UQCR10/QCR9, UQCR11/QCR10 and a cleavage product of UQCRFS1). This cytochrome bc1 complex then forms a dimer. Requires heme b as cofactor.

Its subcellular location is the mitochondrion inner membrane. Functionally, component of the ubiquinol-cytochrome c reductase complex (complex III or cytochrome b-c1 complex) that is part of the mitochondrial respiratory chain. The b-c1 complex mediates electron transfer from ubiquinol to cytochrome c. Contributes to the generation of a proton gradient across the mitochondrial membrane that is then used for ATP synthesis. This chain is Cytochrome b (MT-CYB), found in Necromys amoenus (Pleasant bolo mouse).